A 393-amino-acid chain; its full sequence is Formate-dependent phosphoribosylglycinamide formyltransferase (393 aa).

N(1)-(5-phospho-beta-D-ribosyl)glycinamide contacts are provided by residues 22-23 (EL) and glutamate 82. Residues arginine 114, lysine 155, 160–165 (SSGHGQ), 195–198 (EGFV), and glutamate 203 each bind ATP. In terms of domain architecture, ATP-grasp spans 119 to 308 (RLAAEELGLP…EFALHARAIL (190 aa)). Mg(2+) is bound by residues glutamate 267 and glutamate 279. N(1)-(5-phospho-beta-D-ribosyl)glycinamide is bound by residues aspartate 286, lysine 356, and 363–364 (RR).

The protein belongs to the PurK/PurT family. Homodimer.

The enzyme catalyses N(1)-(5-phospho-beta-D-ribosyl)glycinamide + formate + ATP = N(2)-formyl-N(1)-(5-phospho-beta-D-ribosyl)glycinamide + ADP + phosphate + H(+). It participates in purine metabolism; IMP biosynthesis via de novo pathway; N(2)-formyl-N(1)-(5-phospho-D-ribosyl)glycinamide from N(1)-(5-phospho-D-ribosyl)glycinamide (formate route): step 1/1. In terms of biological role, involved in the de novo purine biosynthesis. Catalyzes the transfer of formate to 5-phospho-ribosyl-glycinamide (GAR), producing 5-phospho-ribosyl-N-formylglycinamide (FGAR). Formate is provided by PurU via hydrolysis of 10-formyl-tetrahydrofolate. This Mannheimia succiniciproducens (strain KCTC 0769BP / MBEL55E) protein is Formate-dependent phosphoribosylglycinamide formyltransferase.